A 416-amino-acid chain; its full sequence is Phosphoglycerate kinase (416 aa).

14 residues coordinate (2R)-3-phosphoglycerate: valine 23, aspartate 24, phenylalanine 25, asparagine 26, glutamine 38, arginine 39, serine 62, histidine 63, glycine 65, arginine 66, leucine 121, arginine 122, histidine 168, and arginine 169. Glycine 212 is a binding site for ADP. Glycine 212 provides a ligand contact to CDP. Residues alanine 213 and lysine 214 each coordinate AMP. Alanine 213 is an ATP binding site. Alanine 213 is a binding site for Mg(2+). 2 residues coordinate Mg(2+): alanine 216 and aspartate 217. Residue aspartate 217 participates in CDP binding. Lysine 218 provides a ligand contact to AMP. Residue lysine 218 participates in ATP binding. Glycine 236 provides a ligand contact to ADP. Glycine 236 serves as a coordination point for CDP. Residues glycine 237 and glycine 311 each contribute to the AMP site. ATP contacts are provided by glycine 237 and glycine 311. The CDP site is built by glycine 336 and phenylalanine 341. Phenylalanine 341 provides a ligand contact to ADP. Glutamate 342 is an AMP binding site. The ATP site is built by glutamate 342, aspartate 373, and threonine 374. Aspartate 373 is a Mg(2+) binding site.

The protein belongs to the phosphoglycerate kinase family. Monomer. It depends on Mg(2+) as a cofactor.

It is found in the cytoplasm. The protein localises to the mitochondrion. The catalysed reaction is (2R)-3-phosphoglycerate + ATP = (2R)-3-phospho-glyceroyl phosphate + ADP. The protein operates within carbohydrate degradation; glycolysis; pyruvate from D-glyceraldehyde 3-phosphate: step 2/5. Its function is as follows. Catalyzes one of the two ATP producing reactions in the glycolytic pathway via the reversible conversion of 1,3-diphosphoglycerate to 3-phosphoglycerate. Both L- and D- forms of purine and pyrimidine nucleotides can be used as substrates, but the activity is much lower on pyrimidines. Negatively regulates the biosynthesis of acetyl-CoA from pyruvate in the mitochondrion. The protein is Phosphoglycerate kinase (PGK1) of Eremothecium gossypii (strain ATCC 10895 / CBS 109.51 / FGSC 9923 / NRRL Y-1056) (Yeast).